A 74-amino-acid polypeptide reads, in one-letter code: Putative defensin-like protein 27 (74 aa).

A signal peptide spans 1 to 19 (MVHPRFVFFAFLALSVLLA). Intrachain disulfides connect Cys-36–Cys-74, Cys-46–Cys-65, Cys-51–Cys-70, and Cys-55–Cys-72.

It belongs to the DEFL family.

It is found in the secreted. The sequence is that of Putative defensin-like protein 27 from Arabidopsis thaliana (Mouse-ear cress).